Here is a 268-residue protein sequence, read N- to C-terminus: Tryptophan synthase alpha chain (268 aa).

Catalysis depends on proton acceptor residues E49 and D60.

This sequence belongs to the TrpA family. In terms of assembly, tetramer of two alpha and two beta chains.

It catalyses the reaction (1S,2R)-1-C-(indol-3-yl)glycerol 3-phosphate + L-serine = D-glyceraldehyde 3-phosphate + L-tryptophan + H2O. Its pathway is amino-acid biosynthesis; L-tryptophan biosynthesis; L-tryptophan from chorismate: step 5/5. The alpha subunit is responsible for the aldol cleavage of indoleglycerol phosphate to indole and glyceraldehyde 3-phosphate. In Salmonella paratyphi A (strain ATCC 9150 / SARB42), this protein is Tryptophan synthase alpha chain.